The primary structure comprises 220 residues: Transcriptional regulatory protein LnrK (220 aa).

The Response regulatory domain occupies 3–119; the sequence is KIIITDDQDI…TIVKAVMTVH (117 aa). D54 bears the 4-aspartylphosphate mark. One can recognise an HTH luxR-type domain in the interval 151–216; it reads KPNELLDLTE…QAAIYSVRYG (66 aa). Positions 175 to 194 form a DNA-binding region, H-T-H motif; that stretch reads NKEIAEKLYITEGTVKNHVS.

Post-translationally, phosphorylated by LnrJ.

The protein localises to the cytoplasm. Its function is as follows. Required for resistance to linearmycins, a family of antibiotic-specialized metabolites produced by some streptomycetes. Member of the two-component regulatory system LnrJ/LnrK, which induces expression of the LnrLMN ABC transporter in response to linearmycins and other polyenes. Probably binds to the promoter region of the lnrLMN operon and directly regulates its expression. May also promote biofilm formation. In Bacillus subtilis (strain 168), this protein is Transcriptional regulatory protein LnrK.